The chain runs to 1102 residues: Centrosomal protein of 128 kDa (1102 aa).

Ser31, Ser248, and Ser290 each carry phosphoserine. Coiled coils occupy residues 215 to 822 and 878 to 959; these read VSDR…LETE and EELK…ALQM. Positions 326–346 are disordered; it reads QHQVPCISKQPLSHQDDQGDD. 2 disordered regions span residues 991–1048 and 1070–1102; these read SEKT…DHSR and DPAS…KYKK. The span at 1009–1027 shows a compositional bias: basic and acidic residues; it reads QQRRDDTKPRIKSFRDDRP. 2 stretches are compositionally biased toward polar residues: residues 1039 to 1048 and 1076 to 1089; these read HSSSCQDHSR and GDTT…TSPQ. Residues 1090–1102 are compositionally biased toward basic and acidic residues; that stretch reads SKKEEHEIKKYKK.

The protein resides in the cytoplasm. It is found in the cytoskeleton. Its subcellular location is the microtubule organizing center. It localises to the centrosome. The protein localises to the centriole. The protein resides in the spindle pole. In Mus musculus (Mouse), this protein is Centrosomal protein of 128 kDa (Cep128).